The chain runs to 701 residues: UvrABC system protein B (701 aa).

Residues 35–422 (RRIQGGAADT…GGDVVEQVIR (388 aa)) enclose the Helicase ATP-binding domain. 48-55 (GATGTGKT) contributes to the ATP binding site. The Beta-hairpin motif lies at 101–124 (YYDYYQPEAYVPQTDTYIEKDSSI). One can recognise a Helicase C-terminal domain in the interval 439 to 605 (QIDDLVHEIR…PLRKKIADIL (167 aa)). The disordered stretch occupies residues 620 to 648 (ARSRGEKRGTPTPRSGALSGPDRVAEQAK). One can recognise a UVR domain in the interval 656–691 (AALVEQLTEQMHQAAADLQFELAARLRDEIKELKRE).

Belongs to the UvrB family. Forms a heterotetramer with UvrA during the search for lesions. Interacts with UvrC in an incision complex.

It localises to the cytoplasm. The UvrABC repair system catalyzes the recognition and processing of DNA lesions. A damage recognition complex composed of 2 UvrA and 2 UvrB subunits scans DNA for abnormalities. Upon binding of the UvrA(2)B(2) complex to a putative damaged site, the DNA wraps around one UvrB monomer. DNA wrap is dependent on ATP binding by UvrB and probably causes local melting of the DNA helix, facilitating insertion of UvrB beta-hairpin between the DNA strands. Then UvrB probes one DNA strand for the presence of a lesion. If a lesion is found the UvrA subunits dissociate and the UvrB-DNA preincision complex is formed. This complex is subsequently bound by UvrC and the second UvrB is released. If no lesion is found, the DNA wraps around the other UvrB subunit that will check the other stand for damage. The sequence is that of UvrABC system protein B from Thermobifida fusca (strain YX).